Consider the following 121-residue polypeptide: Small ribosomal subunit protein bS16 (121 aa).

Residues 97 to 114 (LAKAKTKDGDNDSSKAES) are compositionally biased toward basic and acidic residues. Residues 97-121 (LAKAKTKDGDNDSSKAESESNEAET) are disordered.

This sequence belongs to the bacterial ribosomal protein bS16 family.

The protein is Small ribosomal subunit protein bS16 of Prochlorococcus marinus (strain MIT 9301).